Reading from the N-terminus, the 163-residue chain is Putative pre-16S rRNA nuclease (163 aa).

Belongs to the YqgF nuclease family.

It localises to the cytoplasm. In terms of biological role, could be a nuclease involved in processing of the 5'-end of pre-16S rRNA. This chain is Putative pre-16S rRNA nuclease, found in Rhodopseudomonas palustris (strain BisB18).